The chain runs to 367 residues: Anhydro-N-acetylmuramic acid kinase (367 aa).

11 to 18 is a binding site for ATP; it reads GTSLDGVD.

It belongs to the anhydro-N-acetylmuramic acid kinase family.

It carries out the reaction 1,6-anhydro-N-acetyl-beta-muramate + ATP + H2O = N-acetyl-D-muramate 6-phosphate + ADP + H(+). Its pathway is amino-sugar metabolism; 1,6-anhydro-N-acetylmuramate degradation. It participates in cell wall biogenesis; peptidoglycan recycling. Functionally, catalyzes the specific phosphorylation of 1,6-anhydro-N-acetylmuramic acid (anhMurNAc) with the simultaneous cleavage of the 1,6-anhydro ring, generating MurNAc-6-P. Is required for the utilization of anhMurNAc either imported from the medium or derived from its own cell wall murein, and thus plays a role in cell wall recycling. This Rhodopseudomonas palustris (strain HaA2) protein is Anhydro-N-acetylmuramic acid kinase.